The chain runs to 143 residues: CRISPR-associated endoribonuclease Cas2 (143 aa).

Residue Asp-14 participates in Mg(2+) binding.

It belongs to the CRISPR-associated endoribonuclease Cas2 protein family. As to quaternary structure, homodimer, forms a heterotetramer with a Cas1 homodimer. It depends on Mg(2+) as a cofactor.

CRISPR (clustered regularly interspaced short palindromic repeat), is an adaptive immune system that provides protection against mobile genetic elements (viruses, transposable elements and conjugative plasmids). CRISPR clusters contain sequences complementary to antecedent mobile elements and target invading nucleic acids. CRISPR clusters are transcribed and processed into CRISPR RNA (crRNA). Functions as a ssRNA-specific endoribonuclease. Involved in the integration of spacer DNA into the CRISPR cassette. The sequence is that of CRISPR-associated endoribonuclease Cas2 from Campylobacter jejuni subsp. jejuni serotype O:2 (strain ATCC 700819 / NCTC 11168).